Reading from the N-terminus, the 689-residue chain is Beta-galactosidase BbgII (689 aa).

Positions 122 and 160 each coordinate substrate. Catalysis depends on glutamate 161, which acts as the Proton donor. Residue glutamate 320 is the Nucleophile of the active site. Substrate-binding positions include tryptophan 328 and 368-371 (EKWH).

It belongs to the glycosyl hydrolase 42 family.

The catalysed reaction is Hydrolysis of terminal non-reducing beta-D-galactose residues in beta-D-galactosides.. In Bifidobacterium bifidum (strain DSM 20082 / JCM 1254 / BCRC 11844 / KCTC 3440 / E319f (Variant a)), this protein is Beta-galactosidase BbgII.